A 242-amino-acid chain; its full sequence is Small ribosomal subunit protein uS2 (242 aa).

Belongs to the universal ribosomal protein uS2 family.

The sequence is that of Small ribosomal subunit protein uS2 from Shewanella halifaxensis (strain HAW-EB4).